Reading from the N-terminus, the 389-residue chain is Serpentine receptor class alpha/beta-14 (389 aa).

Over 1 to 45 the chain is Extracellular; it reads MPSDDFVKTARKALISHSVSIQNYTEDDCQIAFHATTNSFMQTIR. N-linked (GlcNAc...) asparagine glycosylation occurs at Asn23. A helical membrane pass occupies residues 46-66; sequence LVHIFFCTFGAISSSLFIYVL. The Cytoplasmic segment spans residues 67-81; the sequence is LNSSSRNLHRNLRIS. The chain crosses the membrane as a helical span at residues 82-102; sequence LASLAFAALIACLQLDFIAFY. The Extracellular segment spans residues 103–123; that stretch reads HLALTLTADNACDSMYEARKC. A disulfide bridge connects residues Cys123 and Cys198. Residues 124–144 form a helical membrane-spanning segment; that stretch reads AILRFPVVLSIYATLCGIIVL. The Cytoplasmic portion of the chain corresponds to 145-167; that stretch reads AIERTIATLKYKTYEANGSRVVG. A helical transmembrane segment spans residues 168 to 188; the sequence is LVLVTGQWFVCIIVAVFSVLL. Residues 189-208 lie on the Extracellular side of the membrane; the sequence is RSDPGYVHYCTAYVSHPRTS. The chain crosses the membrane as a helical span at residues 209–229; it reads VFSLCFMSALEVATLVYFVLL. Over 230–268 the chain is Cytoplasmic; the sequence is LQSNQRRQVNEFVNKAMHSLSERYQLQENVRIMKILIPS. Residues 269 to 289 form a helical membrane-spanning segment; it reads ITVHAILGFIGLGSMLAFAII. At 290–303 the chain is on the extracellular side; sequence YRYADERLIVGFAP. The helical transmembrane segment at 304–324 threads the bilayer; the sequence is FSEVVLLVIPIYAVVFPIVAV. The Cytoplasmic segment spans residues 325–389; sequence VQNKQLRLAS…FDLLNEMWKK (65 aa).

Belongs to the nematode receptor-like protein srab family.

It localises to the membrane. In Caenorhabditis elegans, this protein is Serpentine receptor class alpha/beta-14.